Consider the following 277-residue polypeptide: uncharacterized protein (277 aa).

Helical transmembrane passes span 37 to 59, 63 to 82, 214 to 236, and 246 to 268; these read YLRY…LYIW, LIFG…PKVI, MLCG…KTYI, and WITS…TYLF.

Its subcellular location is the cell membrane. This is an uncharacterized protein from Bacillus anthracis.